The chain runs to 137 residues: Nucleoside diphosphate kinase (137 aa).

Residues lysine 9, phenylalanine 57, arginine 85, threonine 91, arginine 102, and asparagine 112 each coordinate ATP. The Pros-phosphohistidine intermediate role is filled by histidine 115.

The protein belongs to the NDK family. In terms of assembly, homotetramer. Requires Mg(2+) as cofactor.

It localises to the cytoplasm. The catalysed reaction is a 2'-deoxyribonucleoside 5'-diphosphate + ATP = a 2'-deoxyribonucleoside 5'-triphosphate + ADP. It carries out the reaction a ribonucleoside 5'-diphosphate + ATP = a ribonucleoside 5'-triphosphate + ADP. Its function is as follows. Major role in the synthesis of nucleoside triphosphates other than ATP. The ATP gamma phosphate is transferred to the NDP beta phosphate via a ping-pong mechanism, using a phosphorylated active-site intermediate. This chain is Nucleoside diphosphate kinase, found in Sulfurovum sp. (strain NBC37-1).